The primary structure comprises 325 residues: Malate dehydrogenase (325 aa).

Residue 11 to 17 (GAAGQIA) coordinates NAD(+). Positions 92 and 98 each coordinate substrate. NAD(+) is bound by residues N105, Q112, and 129–131 (VGN). Substrate-binding residues include N131 and R162. H187 serves as the catalytic Proton acceptor.

This sequence belongs to the LDH/MDH superfamily. MDH type 2 family.

The enzyme catalyses (S)-malate + NAD(+) = oxaloacetate + NADH + H(+). Its function is as follows. Catalyzes the reversible oxidation of malate to oxaloacetate. The polypeptide is Malate dehydrogenase (Methylococcus capsulatus (strain ATCC 33009 / NCIMB 11132 / Bath)).